The chain runs to 234 residues: Glucosamine-6-phosphate deaminase (234 aa).

The active-site Proton acceptor; for enolization step is Asp62. The active-site For ring-opening step is the Asn128. Residue His130 is the Proton acceptor; for ring-opening step of the active site. The For ring-opening step role is filled by Glu135.

The protein belongs to the glucosamine/galactosamine-6-phosphate isomerase family. NagB subfamily.

The catalysed reaction is alpha-D-glucosamine 6-phosphate + H2O = beta-D-fructose 6-phosphate + NH4(+). Its pathway is amino-sugar metabolism; N-acetylneuraminate degradation; D-fructose 6-phosphate from N-acetylneuraminate: step 5/5. Functionally, catalyzes the reversible isomerization-deamination of glucosamine 6-phosphate (GlcN6P) to form fructose 6-phosphate (Fru6P) and ammonium ion. The sequence is that of Glucosamine-6-phosphate deaminase from Ligilactobacillus salivarius (strain UCC118) (Lactobacillus salivarius).